A 156-amino-acid chain; its full sequence is Probable chemoreceptor glutamine deamidase CheD (156 aa).

The protein belongs to the CheD family.

It carries out the reaction L-glutaminyl-[protein] + H2O = L-glutamyl-[protein] + NH4(+). Functionally, probably deamidates glutamine residues to glutamate on methyl-accepting chemotaxis receptors (MCPs), playing an important role in chemotaxis. This is Probable chemoreceptor glutamine deamidase CheD from Bdellovibrio bacteriovorus (strain ATCC 15356 / DSM 50701 / NCIMB 9529 / HD100).